The following is a 242-amino-acid chain: Caffeoyl-CoA O-methyltransferase 2 (242 aa).

Position 16 (lysine 16) interacts with substrate. S-adenosyl-L-methionine is bound by residues threonine 58, glutamate 80, 82–83 (GV), serine 88, aspartate 106, and alanine 135. Aspartate 158 is a binding site for substrate. An a divalent metal cation-binding site is contributed by aspartate 158. S-adenosyl-L-methionine is bound at residue aspartate 160. Aspartate 184 and asparagine 185 together coordinate a divalent metal cation. Position 189 (asparagine 189) interacts with substrate.

The protein belongs to the class I-like SAM-binding methyltransferase superfamily. Cation-dependent O-methyltransferase family. CCoAMT subfamily. The cofactor is a divalent metal cation. In terms of tissue distribution, mostly expressed in petal limbs and tubes, and, at low levels, in stems, roots and leaves.

The protein localises to the cytoplasm. Its subcellular location is the cytosol. It carries out the reaction (E)-caffeoyl-CoA + S-adenosyl-L-methionine = (E)-feruloyl-CoA + S-adenosyl-L-homocysteine + H(+). The catalysed reaction is (E)-5-hydroxyferuloyl-CoA + S-adenosyl-L-methionine = (E)-sinapoyl-CoA + S-adenosyl-L-homocysteine + H(+). It functions in the pathway aromatic compound metabolism; phenylpropanoid biosynthesis. Its function is as follows. Involved in the production of floral volatile phenylpropanoids in flowers of fragrant cultivars (e.g. cv. Mitchell and cv. V26) from cinnamic acid, a common precursor with the anthocyanin biosynthesis pathway involved in flower pigmentation. Methylates caffeoyl-CoA to feruloyl-CoA, also able to methylate 5-hydroxyferuloyl-CoA. The sequence is that of Caffeoyl-CoA O-methyltransferase 2 from Petunia hybrida (Petunia).